Consider the following 283-residue polypeptide: Phosphatidylglycerol--prolipoprotein diacylglyceryl transferase (283 aa).

The next 7 helical transmembrane spans lie at 21 to 41 (IEVHWYGLAYACAIVIAFYMA), 62 to 82 (YFLWAELGIVLGARIGYILIY), 106 to 126 (FIGIRGMSYHGGLVGFLIASY), 136 to 156 (LLIYLDLIAISLPLGYVFGRI), 190 to 210 (PSQLIEAFLEGVIVFLMVMWA), 218 to 238 (GLLIVVYGLGYSLMRFIAEFY), and 252 to 272 (LSMGQILSLFMVIVSLGILLY). Position 155 (Arg-155) interacts with a 1,2-diacyl-sn-glycero-3-phospho-(1'-sn-glycerol).

The protein belongs to the Lgt family.

Its subcellular location is the cell inner membrane. It carries out the reaction L-cysteinyl-[prolipoprotein] + a 1,2-diacyl-sn-glycero-3-phospho-(1'-sn-glycerol) = an S-1,2-diacyl-sn-glyceryl-L-cysteinyl-[prolipoprotein] + sn-glycerol 1-phosphate + H(+). Its pathway is protein modification; lipoprotein biosynthesis (diacylglyceryl transfer). Catalyzes the transfer of the diacylglyceryl group from phosphatidylglycerol to the sulfhydryl group of the N-terminal cysteine of a prolipoprotein, the first step in the formation of mature lipoproteins. This chain is Phosphatidylglycerol--prolipoprotein diacylglyceryl transferase, found in Helicobacter acinonychis (strain Sheeba).